The sequence spans 240 residues: Aquaporin SIP1-1 (240 aa).

2 helical membrane passes run 13–33 and 44–64; these read LMTF…AAII and APLV…TVIF. The NPA 1 signature appears at 70 to 72; that stretch reads NPT. The next 3 helical transmembrane spans lie at 89–109, 132–152, and 163–183; these read SLAI…LAIM, GAIA…LIIL, and FLLA…TGPA. Positions 185–187 match the NPA 2 motif; the sequence is NPA. A helical transmembrane segment spans residues 203–223; it reads DHIYVYWISSFVGALSAALLF.

It belongs to the MIP/aquaporin (TC 1.A.8) family. SIP (TC 1.A.8.10) subfamily. Expressed in roots and above ground. Expressed in elongating regions of the root tips, trichome cells of the rosette leaves, vascular tissues of the flower petals, stigma, stamens (anthers and filaments), pollen and the top and bottom (receptacle) of siliques.

It localises to the endoplasmic reticulum membrane. Functionally, water channel required to facilitate the transport of water across cell membrane. In Arabidopsis thaliana (Mouse-ear cress), this protein is Aquaporin SIP1-1 (SIP1-1).